The sequence spans 236 residues: tRNA (guanine-N(1)-)-methyltransferase (236 aa).

S-adenosyl-L-methionine-binding positions include glycine 110 and 129-134; that span reads LGDFVL.

Belongs to the RNA methyltransferase TrmD family. In terms of assembly, homodimer.

The protein localises to the cytoplasm. It catalyses the reaction guanosine(37) in tRNA + S-adenosyl-L-methionine = N(1)-methylguanosine(37) in tRNA + S-adenosyl-L-homocysteine + H(+). In terms of biological role, specifically methylates guanosine-37 in various tRNAs. The protein is tRNA (guanine-N(1)-)-methyltransferase of Clostridium perfringens (strain SM101 / Type A).